The primary structure comprises 305 residues: tRNA pseudouridine synthase B (305 aa).

The active-site Nucleophile is the Asp-39.

This sequence belongs to the pseudouridine synthase TruB family. Type 1 subfamily.

The catalysed reaction is uridine(55) in tRNA = pseudouridine(55) in tRNA. Functionally, responsible for synthesis of pseudouridine from uracil-55 in the psi GC loop of transfer RNAs. This chain is tRNA pseudouridine synthase B, found in Staphylococcus aureus (strain MSSA476).